The chain runs to 826 residues: Lon protease (826 aa).

Residues 1-20 (MSEEELNNRDTESKQEHDEN) are compositionally biased toward basic and acidic residues. The segment at 1 to 27 (MSEEELNNRDTESKQEHDENNSNFEAG) is disordered. In terms of domain architecture, Lon N-terminal spans 33–231 (LPVLPLREVI…KVHALLEKEL (199 aa)). 384–391 (GPPGVGKT) contributes to the ATP binding site. Positions 620–801 (ENLVGMTTGL…SEALTFTLAE (182 aa)) constitute a Lon proteolytic domain. Catalysis depends on residues serine 707 and lysine 750.

The protein belongs to the peptidase S16 family. In terms of assembly, homohexamer. Organized in a ring with a central cavity.

Its subcellular location is the cytoplasm. The enzyme catalyses Hydrolysis of proteins in presence of ATP.. Functionally, ATP-dependent serine protease that mediates the selective degradation of mutant and abnormal proteins as well as certain short-lived regulatory proteins. Required for cellular homeostasis and for survival from DNA damage and developmental changes induced by stress. Degrades polypeptides processively to yield small peptide fragments that are 5 to 10 amino acids long. Binds to DNA in a double-stranded, site-specific manner. In Neorickettsia sennetsu (strain ATCC VR-367 / Miyayama) (Ehrlichia sennetsu), this protein is Lon protease.